Consider the following 310-residue polypeptide: Dehydrodolichyl diphosphate synthase 2 (310 aa).

This sequence belongs to the UPP synthase family. Mg(2+) serves as cofactor.

The protein operates within protein modification; protein glycosylation. Its function is as follows. Catalyzes cis-prenyl chain elongation to produce the polyprenyl backbone of dolichol, a glycosyl carrier-lipid required for the biosynthesis of several classes of glycoprotein. The protein is Dehydrodolichyl diphosphate synthase 2 of Arabidopsis thaliana (Mouse-ear cress).